Reading from the N-terminus, the 400-residue chain is Arabinan endo-1,5-alpha-L-arabinosidase B (400 aa).

The N-terminal stretch at 1–16 is a signal peptide; that stretch reads MAVIFVLFFLVSMALS. A glycan (N-linked (GlcNAc...) asparagine) is linked at Asn24. The active-site Proton acceptor is the Asp70. The N-linked (GlcNAc...) asparagine glycan is linked to Asn184. The active-site Proton donor is the Glu277. Asn372 is a glycosylation site (N-linked (GlcNAc...) asparagine).

It belongs to the glycosyl hydrolase 43 family.

It is found in the secreted. The catalysed reaction is Endohydrolysis of (1-&gt;5)-alpha-arabinofuranosidic linkages in (1-&gt;5)-arabinans.. The protein operates within glycan metabolism; L-arabinan degradation. Functionally, endo-1,5-alpha-L-arabinanase involved in degradation of pectin. Its preferred substrate is linear 1,5-alpha-L-arabinan. In Emericella nidulans (strain FGSC A4 / ATCC 38163 / CBS 112.46 / NRRL 194 / M139) (Aspergillus nidulans), this protein is Arabinan endo-1,5-alpha-L-arabinosidase B (abnB).